The sequence spans 257 residues: tRNA pseudouridine synthase A (257 aa).

The Nucleophile role is filled by aspartate 53. Substrate is bound at residue tyrosine 111.

It belongs to the tRNA pseudouridine synthase TruA family. As to quaternary structure, homodimer.

It carries out the reaction uridine(38/39/40) in tRNA = pseudouridine(38/39/40) in tRNA. Its function is as follows. Formation of pseudouridine at positions 38, 39 and 40 in the anticodon stem and loop of transfer RNAs. In Xylella fastidiosa (strain M12), this protein is tRNA pseudouridine synthase A.